Consider the following 479-residue polypeptide: UDP-N-acetylmuramoylalanine--D-glutamate ligase (479 aa).

Residue 110–116 coordinates ATP; sequence GTNGKTS.

The protein belongs to the MurCDEF family.

The protein resides in the cytoplasm. The catalysed reaction is UDP-N-acetyl-alpha-D-muramoyl-L-alanine + D-glutamate + ATP = UDP-N-acetyl-alpha-D-muramoyl-L-alanyl-D-glutamate + ADP + phosphate + H(+). It participates in cell wall biogenesis; peptidoglycan biosynthesis. In terms of biological role, cell wall formation. Catalyzes the addition of glutamate to the nucleotide precursor UDP-N-acetylmuramoyl-L-alanine (UMA). This Bifidobacterium adolescentis (strain ATCC 15703 / DSM 20083 / NCTC 11814 / E194a) protein is UDP-N-acetylmuramoylalanine--D-glutamate ligase.